The primary structure comprises 406 residues: Luteothin monooxygenase (406 aa).

The heme b site is built by His98, Arg102, Arg296, Gly350, His353, and Cys355.

It belongs to the cytochrome P450 family. Monomer. Requires heme b as cofactor.

The enzyme catalyses luteothin + 4 reduced [2Fe-2S]-[ferredoxin] + 2 O2 + 4 H(+) = aureothin + 4 oxidized [2Fe-2S]-[ferredoxin] + 3 H2O. Its pathway is antibiotic biosynthesis. The protein operates within polyketide biosynthesis. Its function is as follows. Bifunctional cytochrome P450 protein involved in the biosynthesis of the antibiotic aureothin, a nitroaryl polyketide metabolite with antifungal, cytotoxic and insecticidal activities. Catalyzes the hydroxylation of luteothin (also called deoxyaureothin), leading to the formation of the intermediate (7R)-7-hydroxydeoxyaureothin, followed by the formation of the aureothin tetrahydrofuran ring, the final step in the biosynthesis of aureothin. This is Luteothin monooxygenase from Streptomyces thioluteus.